The chain runs to 331 residues: POU domain, class 4, transcription factor 3 (331 aa).

Residues 81-97 (TSSSSTVPISHPSSNLP) are compositionally biased toward low complexity. Positions 81–108 (TSSSSTVPISHPSSNLPSHHHHHLSHQT) are disordered. Residues 172–249 (DVESDPRELE…VLQAWLEEAE (78 aa)) form the POU-specific domain. A DNA-binding region (homeobox) is located at residues 267-326 (RKRKRTSIAAPEKRSLEAYFAIQPRPSSEKIAAIAEKLDLKKNVVRVWFCNQRQKQKRMK).

The protein belongs to the POU transcription factor family. Class-4 subfamily. Interaction with ISL1. Expressed in the nervous system. Expressed in the otic vesicle during embryogenesis. Expressed in the adult retina in a subset of retinal ganglion cells (RGCs), and at a lower level in the adult tectum. Not expressed in the adult olfactory bulb.

It localises to the nucleus. Its subcellular location is the cytoplasm. Functionally, acts as a transcriptional activator. Acts by binding to sequences related to the consensus octamer motif 5'-ATGCAAAT-3' in the regulatory regions of its target genes. May play a role in specifying terminally differentiated neuronal phenotypes. This chain is POU domain, class 4, transcription factor 3 (pou4f3), found in Danio rerio (Zebrafish).